A 136-amino-acid polypeptide reads, in one-letter code: Large ribosomal subunit protein uL16 (136 aa).

The protein belongs to the universal ribosomal protein uL16 family. Part of the 50S ribosomal subunit.

Functionally, binds 23S rRNA and is also seen to make contacts with the A and possibly P site tRNAs. This is Large ribosomal subunit protein uL16 from Rickettsia africae (strain ESF-5).